The primary structure comprises 1343 residues: DNA-directed RNA polymerase subunit beta (1343 aa).

The protein belongs to the RNA polymerase beta chain family. In terms of assembly, the RNAP catalytic core consists of 2 alpha, 1 beta, 1 beta' and 1 omega subunit. When a sigma factor is associated with the core the holoenzyme is formed, which can initiate transcription.

It carries out the reaction RNA(n) + a ribonucleoside 5'-triphosphate = RNA(n+1) + diphosphate. Functionally, DNA-dependent RNA polymerase catalyzes the transcription of DNA into RNA using the four ribonucleoside triphosphates as substrates. The polypeptide is DNA-directed RNA polymerase subunit beta (Shewanella piezotolerans (strain WP3 / JCM 13877)).